A 1547-amino-acid polypeptide reads, in one-letter code: MTSRPALGTHGSGAPSRNQVRRPSKPANALPPDCIDPTLEDERPAAHNGASEARPPPRGRPHIFYSTLASSAFDLPIHSFPYQPTVNLPVPPRPGSLHLRDASQQRQILPGGTGVKDAPKLGVPETVPIPVHFPGEKAADVFPWTGTNAEDTLSEALVKAGVSNKPQIMNETNTARPSLWSNLKNKSGITTLSTLFVAVLEKRQQNGRLQTPNTFKPPPRLTLRDSTREGWLHDLANPTVSLRRLSRTIPHGLTGKVLLDQCLNKNIPLPRALWLAKCVGINELRAHKRKGQAGTVTWGRGWTSSVEQFLDSVISTIGQGDWKLRITYALQLATHLYKEHLLDDDHFLGWIPFGLDMCSSERLFIWLLVVAVPHYWNDISSCRQRGKRLAESLLNHLAKLSPIEDLAAPSTALQFLENSLLKLVTTRPACLLLPISWPKHSAALKALVTKRNLPQTAQAVEKLDGRNTRLLSFVRNGKSSSRTGAARVFHKLDSINYAAPIRIEDLSYECMEITSNAVQLISTLLHWACSCYRAGSHRIYLATRLLRRWSHLGADVYEGIIVYLQSMSWVKSGEIHVLLRIVAELVRSKHFSVGRYLQWLIATGSLGCDASLSLPSSWPVRLITEVPLTGLSDQVRTLRSTLLRGTAHSTELEEQALVNVKQSISQAVPAIFGLSLTIPSRIELNFAKLSGTIRLEIGIWLRQQVAQHAEVNEQSYLEQCEDLAILADVIGITASSLDMAVLASVADTLLYHMKTFRAIGAFDPLLGRLAMRYAAIRTVKFPERELLLSFQNLARTAQPDGQLLQLLAYDLSRLDQKNAVAACSPASDNMGEVMQHAGTCSDDEIERILSSGTSMDQNMMSRVLRKLVRNLEEHVDKGYRQFENHPAWFWRLRNFDEATFDVVLREWLETSIMACQLHILQIAIPPLVASSCMELSSFLDILRSCLANAKATQVLEPATIAIDLLRLLLPSGLSAMSCSSQDAYRYRTEQYKLCFTSDTRIIHCIGEVADLVLSTPSNSMLQTVSSLLSSETVLSIVKEHVVSDPDCLSKMKTGQSGQASFNTCFKTLLNGLLDPSGQWCLADISPEEQIIAVFKAASELSLPLCQAMIEHIFASSSALDTHAVDRLSVTVLNAVRTSMEKDQSQGLELLTNLEGPLADKIRSHAEREVLDASYFLLRGSTDGIASDCIVTAKMMQKYLTVIELTMGETPQADEQFAMLAALTDRFKGIFHALSECGGLGTPTNQATASPVVQVLAALLSLVASHGPQLLRNATQSHQAALMVALQDIVTHASLELFPSIIEHVFDVLIVLSDHISEDVRNQIARLESAKSTNSDRAYFIHSQKAPIDGWLMLTKPVIPPLEPPQPPNPNTTQNQSSPYQSPQMTSNTAAPQHRYFNQQQQQSQTLQPSQQTQHMRTYPQYAQHAAQPNRHLPAQLQRTPSHHASLSPLQQMQHMQQLQGLAQQRASQPSPIHSQRPTSVASPGGMGGLAGGNAAPSKAHTSYVNQQRDTQQYPFVQPRWEILAESSGNPTLNETAISLSLFGARRV.

Disordered regions lie at residues 1–63 (MTSR…RPHI) and 1356–1509 (PVIP…QQRD). Residues 1357-1369 (VIPPLEPPQPPNP) are compositionally biased toward pro residues. The segment covering 1379 to 1390 (YQSPQMTSNTAA) has biased composition (polar residues). Low complexity-rich tracts occupy residues 1398–1413 (QQQQQSQTLQPSQQTQ) and 1446–1468 (LSPLQQMQHMQQLQGLAQQRASQ). Composition is skewed to polar residues over residues 1469-1480 (PSPIHSQRPTSV) and 1499-1509 (AHTSYVNQQRD).

The protein belongs to the Mediator complex subunit 12 family. In terms of assembly, component of the SRB8-11 complex, which itself associates with the Mediator complex.

It is found in the nucleus. Functionally, component of the SRB8-11 complex. The SRB8-11 complex is a regulatory module of the Mediator complex which is itself involved in regulation of basal and activated RNA polymerase II-dependent transcription. The SRB8-11 complex may be involved in the transcriptional repression of a subset of genes regulated by Mediator. It may inhibit the association of the Mediator complex with RNA polymerase II to form the holoenzyme complex. This is Mediator of RNA polymerase II transcription subunit 12 (SRB8) from Phaeosphaeria nodorum (strain SN15 / ATCC MYA-4574 / FGSC 10173) (Glume blotch fungus).